A 278-amino-acid polypeptide reads, in one-letter code: Envelope glycoprotein L (278 aa).

The signal sequence occupies residues 1 to 30 (MCRRPDCGFSFSPGPVVLLWCCLLLPIVSS). In terms of domain architecture, gL betaherpesvirus-type spans 43–256 (VPAECPELTR…DKYYAGLPPE (214 aa)). A disulfide bond links C154 and C159.

It belongs to the herpesviridae glycoprotein L (gL) family. Betaherpesvirinae gL subfamily. In terms of assembly, interacts with glycoprotein H (gH); this interaction is necessary for the correct processing and cell surface expression of gH. Forms the envelope pentamer complex (PC) composed of gH, gL, UL128, UL130, and UL131A. The pentamer interacts with host NRP2. Forms the envelope trimer complex composed of gH, gL, and gO. The trimer interacts with host PDGFRA. The trimer also interacts with host EPHA2.

Its subcellular location is the virion membrane. It localises to the host cell membrane. The protein localises to the host Golgi apparatus. The protein resides in the host trans-Golgi network. The heterodimer glycoprotein H-glycoprotein L is required for the fusion of viral and plasma membranes leading to virus entry into the host cell. Acts as a functional inhibitor of gH and maintains gH in an inhibited form. Upon binding to host integrins, gL dissociates from gH leading to activation of the viral fusion glycoproteins gB and gH. In human cytomegalovirus, forms two distincts complexes to mediate viral entry, a trimer and a pentamer at the surface of the virion envelope. The gH-gL-gO trimer is required for infection in fibroblasts by interacting with host PDGFRA, and in glioblastoma cells by interacting with host EPHA2. The gH-gL-UL128-UL130-UL131A pentamer is essential for viral entry in epithelial, endothelial and myeloid cells via interaction with host NRP2. This Human cytomegalovirus (strain 5040) (HHV-5) protein is Envelope glycoprotein L.